A 160-amino-acid chain; its full sequence is Small ribosomal subunit protein uS9 (160 aa).

Belongs to the universal ribosomal protein uS9 family.

The protein is Small ribosomal subunit protein uS9 of Bradyrhizobium sp. (strain ORS 278).